A 499-amino-acid polypeptide reads, in one-letter code: Zinc finger protein PLAG1 (499 aa).

Residues 1–33 form a disordered region; sequence MATVIPGDLSEVRDTQKAPSGKRKRGESKPRKN. Positions 2 to 84 are interaction with KPNA2; sequence ATVIPGDLSE…SKYKLQRHMA (83 aa). The Nuclear localization signal signature appears at 22-25; sequence KRKR. 7 C2H2-type zinc fingers span residues 34–56, 62–86, 92–114, 121–143, 150–172, 185–207, and 213–236; these read FPCQ…SFSH, YKCT…MATH, HKCN…LHTH, FKCE…LALH, LTCK…LKSH, HQCE…MVVH, and FLCQ…KKSH. The tract at residues 41 to 242 is decreased nuclear import with localization in the nucleus but also in the cytoplasm; it reads KAFNSVEKLK…KKSHNQELLK (202 aa). The tract at residues 243–383 is repression domain; contains 3 sumoylation motifs and massively decrease transcription activity; sequence VKTEPVDFLD…SQASSSKLGL (141 aa). Residues 243–499 are activates transcription; Inhibition of nuclear import due to lack of NLS and KPNA2 interaction; that stretch reads VKTEPVDFLD…TLPRFHQAFQ (257 aa). Glycyl lysine isopeptide (Lys-Gly) (interchain with G-Cter in SUMO) cross-links involve residues Lys244 and Lys263. The interval 364–400 is disordered; sequence QGGAPSSSQDSQASSSKLGLEPQSGSPDDGAGDLSLS. Residues 369 to 379 are compositionally biased toward low complexity; sequence SSSQDSQASSS. A massively activates transcription region spans residues 384–499; sequence EPQSGSPDDG…TLPRFHQAFQ (116 aa).

This sequence belongs to the krueppel C2H2-type zinc-finger protein family. Interacts with KPNA2, which escorts protein to the nucleus via interaction with nuclear localization signal. Interacts with E3 SUMO-protein ligase PIAS1, PIAS2 and PIAS4. In terms of processing, sumoylated with SUMO1; which inhibits transcriptional activity, but does not affect nuclear localization. Blockers of sumoylation pathway such as SENP3 and inactive UBE2I increases transcriptional capacity. Sumoylation is increased in the presence of PIAS1. Post-translationally, acetylated by lysine acetyltransferase EP300; which activates transcriptional capacity. Lysine residues that are sumoylated also seem to be target for acetylation. Expressed in heart, spleen, lung, kidney, brain, testis and epididymis but not in salivary glands.

It is found in the nucleus. In terms of biological role, transcription factor whose activation results in up-regulation of target genes, such as IGFII, leading to uncontrolled cell proliferation: when overexpressed in cultured cells, higher proliferation rate and transformation are observed. Other target genes such as CRLF1, CRABP2, CRIP2, PIGF are strongly induced in cells with PLAG1 induction. Proto-oncogene whose ectopic expression can trigger the development of pleomorphic adenomas of the salivary gland and lipoblastomas. Cooperates with CBFB-MYH11. The polypeptide is Zinc finger protein PLAG1 (Plag1) (Rattus norvegicus (Rat)).